The chain runs to 94 residues: Integration host factor subunit beta (94 aa).

The protein belongs to the bacterial histone-like protein family. In terms of assembly, heterodimer of an alpha and a beta chain.

Functionally, this protein is one of the two subunits of integration host factor, a specific DNA-binding protein that functions in genetic recombination as well as in transcriptional and translational control. In Azoarcus sp. (strain BH72), this protein is Integration host factor subunit beta.